The chain runs to 249 residues: Probable transcriptional regulatory protein Strop_1792 (249 aa).

This sequence belongs to the TACO1 family.

Its subcellular location is the cytoplasm. The protein is Probable transcriptional regulatory protein Strop_1792 of Salinispora tropica (strain ATCC BAA-916 / DSM 44818 / JCM 13857 / NBRC 105044 / CNB-440).